Consider the following 314-residue polypeptide: Putative S-adenosyl-L-methionine-dependent methyltransferase MAV_0301 (314 aa).

S-adenosyl-L-methionine contacts are provided by residues aspartate 132 and aspartate 161–leucine 162.

It belongs to the UPF0677 family.

Its function is as follows. Exhibits S-adenosyl-L-methionine-dependent methyltransferase activity. The chain is Putative S-adenosyl-L-methionine-dependent methyltransferase MAV_0301 from Mycobacterium avium (strain 104).